The following is a 1508-amino-acid chain: Pleiotropic ABC efflux transporter of multiple drugs CDR1 (1508 aa).

The interval 1-30 (MSEKPFVDAPPPEDGVAHQVSPHDNGSLSE) is disordered. Residues 1-524 (MSEKPFVDAP…NFLRMKGDPS (524 aa)) are Cytoplasmic-facing. Residues 165–415 (DYWHDMRKID…FLDMGYECPQ (251 aa)) form the ABC transporter 1 domain. Residues 525–545 (IVIFSIFGQGVMGLILSSVFY) form a helical membrane-spanning segment. Over 546-559 (NLQPTTGSFYYRGA) the chain is Extracellular. The helical transmembrane segment at 560 to 580 (AMFFAVLFNAFASLLEIMSLF) threads the bilayer. The Cytoplasmic segment spans residues 581-608 (EARPIVEKHKKYALYRPSADALASIISE). Residues 609–629 (LPVKLCMSTCFNFSFYFMVHF) form a helical membrane-spanning segment. Residues 630–633 (RRDP) are Extracellular-facing. The helical transmembrane segment at 634 to 654 (GRFFFYWLFCGLCTLCMSHMF) threads the bilayer. Residues 655-673 (RSLGAVSTSLAAAMTPATS) lie on the Cytoplasmic side of the membrane. Residues 674 to 694 (VLLAMVIFTGFVIPIPSMLGW) traverse the membrane as a helical segment. The Extracellular segment spans residues 695–775 (CRWIQYINPV…EYVNAHKWRN (81 aa)). A helical membrane pass occupies residues 776 to 796 (LGIVVAYIVVFLGVYIALTEF). Residues 797–1203 (NKGAMQKGEI…TFQQYWRSPG (407 aa)) lie on the Cytoplasmic side of the membrane. Positions 839–860 (KISYSDAMEKDSGESSTSDDKL) are disordered. Positions 845-860 (AMEKDSGESSTSDDKL) are enriched in basic and acidic residues. In terms of domain architecture, ABC transporter 2 spans 867–1110 (FHWKDLTYQV…GLIDYFEKHG (244 aa)). Position 903–910 (903–910 (GASGAGKT)) interacts with ATP. Residues 1204 to 1224 (YIYSKFFLVITASLFNGFAFF) form a helical membrane-spanning segment. The Extracellular portion of the chain corresponds to 1225 to 1239 (HSGTSQQGLQNQMFS). A helical transmembrane segment spans residues 1240 to 1260 (MFMFYMPLQTLIQQMLPYYVM). At 1261–1288 (QREIYEVREAPSRTFSWFAFIASQITTE) the chain is on the cytoplasmic side. The helical transmembrane segment at 1289–1309 (IPFQVVLGTVAFFCWYYPVGL) threads the bilayer. Residues 1310–1326 (YQNATPTDTVHERGALM) are Extracellular-facing. A helical membrane pass occupies residues 1327–1347 (WLLVTAFYVYTISLGQMVVAF). At 1348–1362 (MEIADNAANMVNLMF) the chain is on the cytoplasmic side. A helical transmembrane segment spans residues 1363-1383 (IMCLNFCGVLATPEALPGFWI). At 1384-1475 (FMYRCNPFTY…HAVYSERWRN (92 aa)) the chain is on the extracellular side. A helical transmembrane segment spans residues 1476–1496 (FGIFIAFIAINMIGTIFFYWL). At 1497-1508 (ARVPKSSKSKNH) the chain is on the cytoplasmic side.

This sequence belongs to the ABC transporter superfamily.

The protein localises to the cell membrane. It carries out the reaction fluconazole(in) + ATP + H2O = fluconazole(out) + ADP + phosphate + H(+). It catalyses the reaction itraconazole(in) + ATP + H2O = itraconazole(out) + ADP + phosphate + H(+). The catalysed reaction is voriconazole(in) + ATP + H2O = voriconazole(out) + ADP + phosphate + H(+). The bis-benzodioxolylindolinone azoffluxin acts as an inhibitor of the transporter activity. Clorgyline analogs M19 and M25 inhibit the transcporter activity by uncoupling CDR1 ATPase activity from the active transport of substrates. Activity is also inhibited by beauvericin and oligomycin. In terms of biological role, pleiotropic ABC efflux transporter that confers resistance to numerous chemicals including itraconazole, fluconazole, voriconazole and posaconazole. This Candidozyma auris (Yeast) protein is Pleiotropic ABC efflux transporter of multiple drugs CDR1.